The primary structure comprises 367 residues: GDSL esterase/lipase 3 (367 aa).

Residues 1–23 form the signal peptide; sequence MVRLVLIIFFVYTIILSIGSINC. Catalysis depends on S42, which acts as the Nucleophile. N-linked (GlcNAc...) asparagine glycosylation is found at N175, N194, and N321. Active-site residues include D329 and H332. The N-linked (GlcNAc...) asparagine glycan is linked to N351.

This sequence belongs to the 'GDSL' lipolytic enzyme family.

Its subcellular location is the secreted. In Arabidopsis thaliana (Mouse-ear cress), this protein is GDSL esterase/lipase 3 (GLIP3).